The primary structure comprises 936 residues: Lipoxygenase 2.1, chloroplastic (936 aa).

The segment at 1–69 (MLTATKPLVG…LSADSNGAAV (69 aa)) is disordered. Positions 47-59 (STSTSTTTTTTTT) are enriched in low complexity. The PLAT domain maps to 88 to 217 (MKATVTVHMS…CTPDKRVFFP (130 aa)). In terms of domain architecture, Lipoxygenase spans 220 to 936 (SYLPSQTPKG…EMGIPNSISI (717 aa)). The tract at residues 264–308 (LGNPDDDNNPTTRPVLGGKEHPYPRRCRTGRPRSKKDPFSEERSH) is disordered. Residues 287 to 297 (PRRCRTGRPRS) are compositionally biased toward basic residues. Basic and acidic residues predominate over residues 298–308 (KKDPFSEERSH). Residues His587, His592, His777, Asn781, and Ile936 each coordinate Fe cation.

Belongs to the lipoxygenase family. Requires Fe cation as cofactor. In terms of processing, the N-terminus is blocked.

Its subcellular location is the plastid. It is found in the chloroplast. The catalysed reaction is (9Z,12Z)-octadecadienoate + O2 = (13S)-hydroperoxy-(9Z,11E)-octadecadienoate. It catalyses the reaction (9Z,12Z,15Z)-octadecatrienoate + O2 = (13S)-hydroperoxy-(9Z,11E,15Z)-octadecatrienoate. Its pathway is lipid metabolism; oxylipin biosynthesis. In terms of biological role, plant lipoxygenase may be involved in a number of diverse aspects of plant physiology including growth and development, pest resistance, and senescence or responses to wounding. This enzyme is possibly involved in jasmonic acid synthesis. It exhibits linoleate 13-lipoxygenase and arachidonate 15-lipoxygenase activity. The chain is Lipoxygenase 2.1, chloroplastic (LOX2.1) from Hordeum vulgare (Barley).